A 269-amino-acid chain; its full sequence is Shikimate dehydrogenase (NADP(+)) (269 aa).

Shikimate contacts are provided by residues 22–24 and threonine 68; that span reads TLS. Residue lysine 72 is the Proton acceptor of the active site. Shikimate contacts are provided by asparagine 93 and aspartate 104. NADP(+)-binding positions include 128 to 132, 152 to 157, and phenylalanine 210; these read GAGGA and NRTNLR. A shikimate-binding site is contributed by tyrosine 212. NADP(+) is bound at residue glycine 233.

Belongs to the shikimate dehydrogenase family. Homodimer.

It carries out the reaction shikimate + NADP(+) = 3-dehydroshikimate + NADPH + H(+). The protein operates within metabolic intermediate biosynthesis; chorismate biosynthesis; chorismate from D-erythrose 4-phosphate and phosphoenolpyruvate: step 4/7. Functionally, involved in the biosynthesis of the chorismate, which leads to the biosynthesis of aromatic amino acids. Catalyzes the reversible NADPH linked reduction of 3-dehydroshikimate (DHSA) to yield shikimate (SA). In Saccharolobus islandicus (strain L.S.2.15 / Lassen #1) (Sulfolobus islandicus), this protein is Shikimate dehydrogenase (NADP(+)).